Here is a 252-residue protein sequence, read N- to C-terminus: MFS-type transporter cctQ (252 aa).

2 consecutive transmembrane segments (helical) span residues 54 to 74 (IGSL…VVLP) and 116 to 136 (FGSF…IVGF). N-linked (GlcNAc...) asparagine glycosylation is present at N179. Helical transmembrane passes span 180–200 (FSIC…WILA) and 208–228 (FLVW…YFTT).

This sequence belongs to the major facilitator superfamily.

It is found in the membrane. The protein operates within mycotoxin biosynthesis. In terms of biological role, MFS-type transporter; part of the gene cluster that mediates the biosynthesis of the mycotoxin cyclochlorotine, a hepatotoxic and carcinogenic cyclic chlorinated pentapeptide. Most likely responsible for cyclochlorotine secretion and thereby may contribute to intrinsic resistance. This Talaromyces islandicus (Penicillium islandicum) protein is MFS-type transporter cctQ.